A 2618-amino-acid polypeptide reads, in one-letter code: Mediator of RNA polymerase II transcription subunit 13 (2618 aa).

Low complexity-rich tracts occupy residues 232 to 255, 509 to 519, and 532 to 543; these read FAAA…VPNP, TPASGTGSLSA, and DSKQLVQQQIQQ. Disordered stretches follow at residues 232–279, 509–543, 569–731, 916–957, 970–995, 1036–1055, 1268–1384, 1521–1557, 1614–1633, and 1985–2060; these read FAAA…AAPP, TPAS…QIQQ, GNTP…SGGP, LNIK…AEGL, TSSN…NGGC, TKMF…SSPC, PRTP…TGVV, ASAS…ITGY, SRKN…LDKI, and KTLL…GETK. Phosphothreonine is present on residues threonine 571 and threonine 575. Composition is skewed to polar residues over residues 581 to 590, 634 to 643, and 669 to 681; these read STYSRNSLGG, APTSVSNLQQ, and SITA…QTPS. A compositionally biased stretch (gly residues) spans 692–706; it reads AGGGPAGGQGLGTGP. A compositionally biased stretch (low complexity) spans 711 to 723; it reads AQQPATPTAATSA. Gly residues predominate over residues 939–949; sequence NSSGGGSGSGG. Over residues 1272–1295 the composition is skewed to polar residues; that stretch reads LTPSTVPQPLSSGGSQYLLNQLNC. Gly residues-rich tracts occupy residues 1375–1384 and 1528–1538; these read GLGGGATGVV and AGSGHGHGPNG. The segment covering 1539–1553 has biased composition (low complexity); it reads GSNSSSCTPPSSNPH. Residues 1614–1629 are compositionally biased toward polar residues; the sequence is SRKNQNKQGPGETSSA. Over residues 1993 to 2014 the composition is skewed to low complexity; the sequence is GSGNSHSKGGSSCSSNSSSVSG. 2 positions are modified to phosphoserine: serine 2472 and serine 2475.

Belongs to the Mediator complex subunit 13 family. In terms of assembly, component of the Cdk8 module of the Mediator complex, composed of CycC, Cdk8, kto and skd.

It localises to the nucleus. Component of the Mediator complex, a coactivator involved in the regulated transcription of nearly all RNA polymerase II-dependent genes. Mediator functions as a bridge to convey information from gene-specific regulatory proteins to the basal RNA polymerase II transcription machinery. Mediator is recruited to promoters by direct interactions with regulatory proteins and serves as a scaffold for the assembly of a functional preinitiation complex with RNA polymerase II and the general transcription factors. Required for leg and eye development and macrochaete specification or differentiation. Negatively regulates sex comb development. Required for activated transcription of the MtnB and MtnD genes. This chain is Mediator of RNA polymerase II transcription subunit 13 (skd), found in Drosophila melanogaster (Fruit fly).